Consider the following 173-residue polypeptide: Xanthine-guanine phosphoribosyltransferase (173 aa).

5-phospho-alpha-D-ribose 1-diphosphate-binding positions include 48-49 (RG) and 107-115 (DDLVDTGKT). A Mg(2+)-binding site is contributed by D108. Guanine is bound by residues D111 and I154. D111 and I154 together coordinate xanthine. GMP is bound by residues 111 to 115 (DTGKT) and 153 to 154 (WI).

It belongs to the purine/pyrimidine phosphoribosyltransferase family. XGPT subfamily. Homotetramer. The cofactor is Mg(2+).

It localises to the cell inner membrane. The catalysed reaction is GMP + diphosphate = guanine + 5-phospho-alpha-D-ribose 1-diphosphate. The enzyme catalyses XMP + diphosphate = xanthine + 5-phospho-alpha-D-ribose 1-diphosphate. It carries out the reaction IMP + diphosphate = hypoxanthine + 5-phospho-alpha-D-ribose 1-diphosphate. It participates in purine metabolism; GMP biosynthesis via salvage pathway; GMP from guanine: step 1/1. The protein operates within purine metabolism; XMP biosynthesis via salvage pathway; XMP from xanthine: step 1/1. Purine salvage pathway enzyme that catalyzes the transfer of the ribosyl-5-phosphate group from 5-phospho-alpha-D-ribose 1-diphosphate (PRPP) to the N9 position of the 6-oxopurines guanine and xanthine to form the corresponding ribonucleotides GMP (guanosine 5'-monophosphate) and XMP (xanthosine 5'-monophosphate), with the release of PPi. To a lesser extent, also acts on hypoxanthine. This is Xanthine-guanine phosphoribosyltransferase from Rhodopseudomonas palustris (strain ATCC BAA-98 / CGA009).